The sequence spans 143 residues: Nucleoside diphosphate kinase (143 aa).

Residues Lys11, Phe59, Arg87, Thr93, Arg104, and Asn114 each contribute to the ATP site. The active-site Pros-phosphohistidine intermediate is the His117.

Belongs to the NDK family. Homotetramer. The cofactor is Mg(2+).

The protein localises to the cytoplasm. The catalysed reaction is a 2'-deoxyribonucleoside 5'-diphosphate + ATP = a 2'-deoxyribonucleoside 5'-triphosphate + ADP. It carries out the reaction a ribonucleoside 5'-diphosphate + ATP = a ribonucleoside 5'-triphosphate + ADP. Its function is as follows. Major role in the synthesis of nucleoside triphosphates other than ATP. The ATP gamma phosphate is transferred to the NDP beta phosphate via a ping-pong mechanism, using a phosphorylated active-site intermediate. This Shigella boydii serotype 4 (strain Sb227) protein is Nucleoside diphosphate kinase.